The following is a 619-amino-acid chain: 1-deoxy-D-xylulose-5-phosphate synthase (619 aa).

Residues H74 and 115 to 117 (GHS) contribute to the thiamine diphosphate site. D146 provides a ligand contact to Mg(2+). Thiamine diphosphate contacts are provided by residues 147–148 (GA), N175, Y285, and E365. N175 contributes to the Mg(2+) binding site.

It belongs to the transketolase family. DXPS subfamily. Homodimer. Requires Mg(2+) as cofactor. Thiamine diphosphate serves as cofactor.

The catalysed reaction is D-glyceraldehyde 3-phosphate + pyruvate + H(+) = 1-deoxy-D-xylulose 5-phosphate + CO2. Its pathway is metabolic intermediate biosynthesis; 1-deoxy-D-xylulose 5-phosphate biosynthesis; 1-deoxy-D-xylulose 5-phosphate from D-glyceraldehyde 3-phosphate and pyruvate: step 1/1. Functionally, catalyzes the acyloin condensation reaction between C atoms 2 and 3 of pyruvate and glyceraldehyde 3-phosphate to yield 1-deoxy-D-xylulose-5-phosphate (DXP). The chain is 1-deoxy-D-xylulose-5-phosphate synthase from Clostridium perfringens (strain ATCC 13124 / DSM 756 / JCM 1290 / NCIMB 6125 / NCTC 8237 / Type A).